The following is a 319-amino-acid chain: Acetyl-coenzyme A carboxylase carboxyl transferase subunit alpha (319 aa).

The CoA carboxyltransferase C-terminal domain maps to 43–296 (LRDKSIELTR…KKQLLFDLSE (254 aa)).

The protein belongs to the AccA family. Acetyl-CoA carboxylase is a heterohexamer composed of biotin carboxyl carrier protein (AccB), biotin carboxylase (AccC) and two subunits each of ACCase subunit alpha (AccA) and ACCase subunit beta (AccD).

It is found in the cytoplasm. The catalysed reaction is N(6)-carboxybiotinyl-L-lysyl-[protein] + acetyl-CoA = N(6)-biotinyl-L-lysyl-[protein] + malonyl-CoA. The protein operates within lipid metabolism; malonyl-CoA biosynthesis; malonyl-CoA from acetyl-CoA: step 1/1. Component of the acetyl coenzyme A carboxylase (ACC) complex. First, biotin carboxylase catalyzes the carboxylation of biotin on its carrier protein (BCCP) and then the CO(2) group is transferred by the carboxyltransferase to acetyl-CoA to form malonyl-CoA. The polypeptide is Acetyl-coenzyme A carboxylase carboxyl transferase subunit alpha (Baumannia cicadellinicola subsp. Homalodisca coagulata).